Reading from the N-terminus, the 144-residue chain is Small ribosomal subunit protein eS12z (144 aa).

Position 2 is an N-acetylserine (Ser2).

This sequence belongs to the eukaryotic ribosomal protein eS12 family.

The protein is Small ribosomal subunit protein eS12z (RPS12A) of Arabidopsis thaliana (Mouse-ear cress).